Reading from the N-terminus, the 159-residue chain is Style cell-cycle inhibitor 1 (159 aa).

The tract at residues 1 to 86 is disordered; the sequence is MVSERSSKEK…SDHKLKEGIP (86 aa). Residues 15 to 50 show a composition bias toward basic and acidic residues; the sequence is ARSEDSSSSDYEEKVKRHRGTEKDDERRSRRSDKKD. Basic residues predominate over residues 51–63; that stretch reads KKSHKHHKSSTSK. Basic and acidic residues predominate over residues 64–85; the sequence is KSKDDKPKKKHTESDHKLKEGI.

The protein resides in the nucleus. Component of the auxin signaling transduction pathway that regulates cell proliferation and differentiation during flowers stigmas and styles development. Involved in the regulation of auxin-related genes. The protein is Style cell-cycle inhibitor 1 of Arabidopsis thaliana (Mouse-ear cress).